We begin with the raw amino-acid sequence, 20 residues long: Octopamine receptor (20 aa).

It belongs to the G-protein coupled receptor 1 family.

The protein resides in the cell membrane. In terms of biological role, putative receptor for octopamine. Octopamine (OA) is a neurotransmitter, neurohormone, and neuromodulator in invertebrates. The activity of this receptor is mediated by G proteins which activate adenylyl cyclase. The protein is Octopamine receptor of Photinus pyralis (Common eastern firefly).